We begin with the raw amino-acid sequence, 340 residues long: Glyceraldehyde-3-phosphate dehydrogenase (340 aa).

Residues 11 to 12 and glycine 109 contribute to the NAD(+) site; that span reads TI. A disulfide bridge connects residues cysteine 123 and cysteine 149. 138 to 140 lines the D-glyceraldehyde 3-phosphate pocket; that stretch reads SCN. The active-site Nucleophile is the cysteine 139. An NAD(+)-binding site is contributed by arginine 167. 193–194 is a binding site for D-glyceraldehyde 3-phosphate; the sequence is HA. NAD(+) is bound at residue glutamine 300.

Belongs to the glyceraldehyde-3-phosphate dehydrogenase family. Homotetramer.

The protein localises to the cytoplasm. It catalyses the reaction D-glyceraldehyde 3-phosphate + phosphate + NADP(+) = (2R)-3-phospho-glyceroyl phosphate + NADPH + H(+). The catalysed reaction is D-glyceraldehyde 3-phosphate + phosphate + NAD(+) = (2R)-3-phospho-glyceroyl phosphate + NADH + H(+). The protein operates within carbohydrate degradation; glycolysis; pyruvate from D-glyceraldehyde 3-phosphate: step 1/5. Can use both NAD and NADP as cofactors, but exhibits a marked preference for NADP. The protein is Glyceraldehyde-3-phosphate dehydrogenase (gap) of Saccharolobus solfataricus (strain ATCC 35092 / DSM 1617 / JCM 11322 / P2) (Sulfolobus solfataricus).